A 335-amino-acid polypeptide reads, in one-letter code: N-acetylmuramoyl-L-alanine amidase sle1 (335 aa).

The N-terminal stretch at 1–25 (MQKKVIAAIIGTSAISAVAATQANA) is a signal peptide. Residues 27–70 (TTHTVKPGESVWAISNKYGISIAKLKSLNNLTSNLIFPNQVLKV) enclose the LysM 1 domain. Positions 71–86 (SGSSNSTSNSSRPSTN) are enriched in low complexity. A disordered region spans residues 71–90 (SGSSNSTSNSSRPSTNSGGG). LysM domains follow at residues 91–134 (SYYT…KLKV) and 158–201 (SYYT…KLKV). The Peptidase C51 domain occupies 211 to 335 (ASATTTNRGY…YQVNNYRYIH (125 aa)).

It is found in the secreted. The protein resides in the cell surface. The enzyme catalyses Hydrolyzes the link between N-acetylmuramoyl residues and L-amino acid residues in certain cell-wall glycopeptides.. Peptidoglycan hydrolase involved in the splitting of the septum during cell division. The polypeptide is N-acetylmuramoyl-L-alanine amidase sle1 (sle1) (Staphylococcus aureus (strain bovine RF122 / ET3-1)).